Consider the following 520-residue polypeptide: GMP synthase [glutamine-hydrolyzing] (520 aa).

Residues 12–205 enclose the Glutamine amidotransferase type-1 domain; that stretch reads KIIVLDYGSQ…AVNICGARGD (194 aa). Residue Cys-89 is the Nucleophile of the active site. Residues His-179 and Glu-181 contribute to the active site. The region spanning 206–395 is the GMPS ATP-PPase domain; it reads WSMDNFIDME…LGMPDEVVWR (190 aa). 233-239 is an ATP binding site; the sequence is SGGVDSS.

Homodimer.

It catalyses the reaction XMP + L-glutamine + ATP + H2O = GMP + L-glutamate + AMP + diphosphate + 2 H(+). It participates in purine metabolism; GMP biosynthesis; GMP from XMP (L-Gln route): step 1/1. Functionally, catalyzes the synthesis of GMP from XMP. This chain is GMP synthase [glutamine-hydrolyzing], found in Streptococcus agalactiae serotype III (strain NEM316).